The chain runs to 456 residues: Exodeoxyribonuclease 7 large subunit (456 aa).

Belongs to the XseA family. In terms of assembly, heterooligomer composed of large and small subunits.

Its subcellular location is the cytoplasm. The catalysed reaction is Exonucleolytic cleavage in either 5'- to 3'- or 3'- to 5'-direction to yield nucleoside 5'-phosphates.. Its function is as follows. Bidirectionally degrades single-stranded DNA into large acid-insoluble oligonucleotides, which are then degraded further into small acid-soluble oligonucleotides. This chain is Exodeoxyribonuclease 7 large subunit, found in Shigella boydii serotype 18 (strain CDC 3083-94 / BS512).